Here is a 199-residue protein sequence, read N- to C-terminus: Large ribosomal subunit protein bL25 (199 aa).

It belongs to the bacterial ribosomal protein bL25 family. CTC subfamily. As to quaternary structure, part of the 50S ribosomal subunit; part of the 5S rRNA/L5/L18/L25 subcomplex. Contacts the 5S rRNA. Binds to the 5S rRNA independently of L5 and L18.

Functionally, this is one of the proteins that binds to the 5S RNA in the ribosome where it forms part of the central protuberance. The protein is Large ribosomal subunit protein bL25 of Caulobacter sp. (strain K31).